The sequence spans 295 residues: Tetrahydromethanopterin S-methyltransferase subunit E (295 aa).

The next 7 membrane-spanning stretches (helical) occupy residues 4-24 (MITG…AGAA), 60-80 (GEPV…FVLM), 87-107 (VIMA…TYAV), 140-160 (GFIV…PIPG), 161-181 (FAHP…IGAI), 234-254 (YGGP…FWNT), and 255-275 (IVFG…LLII).

Belongs to the MtrE family. The complex is composed of 8 subunits; MtrA, MtrB, MtrC, MtrD, MtrE, MtrF, MtrG and MtrH.

It localises to the cell membrane. It catalyses the reaction 5-methyl-5,6,7,8-tetrahydromethanopterin + coenzyme M + 2 Na(+)(in) = 5,6,7,8-tetrahydromethanopterin + methyl-coenzyme M + 2 Na(+)(out). It functions in the pathway one-carbon metabolism; methanogenesis from CO(2); methyl-coenzyme M from 5,10-methylene-5,6,7,8-tetrahydromethanopterin: step 2/2. Part of a complex that catalyzes the formation of methyl-coenzyme M and tetrahydromethanopterin from coenzyme M and methyl-tetrahydromethanopterin. This is an energy-conserving, sodium-ion translocating step. The sequence is that of Tetrahydromethanopterin S-methyltransferase subunit E from Methanothermobacter marburgensis (strain ATCC BAA-927 / DSM 2133 / JCM 14651 / NBRC 100331 / OCM 82 / Marburg) (Methanobacterium thermoautotrophicum).